A 118-amino-acid chain; its full sequence is Beta-elicitin cryptogein (118 aa).

A signal peptide spans 1–20 (MNFTALLAAVAAALVGSANA). Disulfide bonds link Cys23–Cys91, Cys47–Cys76, and Cys71–Cys115.

Belongs to the elicitin family.

Its subcellular location is the secreted. Functionally, induces local and distal defense responses (incompatible hypersensitive reaction) in plants from the solanaceae and cruciferae families. Elicits leaf necrosis and causes the accumulation of pathogenesis-related proteins. Might interact with the lipidic molecules of the plasma membrane. This Phytophthora cryptogea protein is Beta-elicitin cryptogein.